The sequence spans 456 residues: Major facilitator superfamily domain-containing protein 10 (456 aa).

A run of 11 helical transmembrane segments spans residues 25 to 45 (VVAV…LLLP), 87 to 107 (VLFG…SAPL), 125 to 145 (LAGV…AAFL), 149 to 169 (VIGG…ADLG), 179 to 199 (AVIG…GAFL), 204 to 224 (VPWL…CFLP), 278 to 298 (LVYF…SFLV), 311 to 328 (KMFF…GAYA), 343 to 363 (AILL…LPIL), 365 to 385 (LGLL…SSVV), and 422 to 442 (LAGA…PFSI).

It belongs to the major facilitator superfamily.

The protein localises to the nucleus inner membrane. The protein resides in the cell membrane. In terms of biological role, probable organic anion transporter which may serve as a transporter for some non-steroidal anti-inflammatory drugs (NSAIDs) as well as other organic anions across the luminal membranes of renal proximal tubules at the final excretion step into the urine. This Bos taurus (Bovine) protein is Major facilitator superfamily domain-containing protein 10 (MFSD10).